A 363-amino-acid polypeptide reads, in one-letter code: Trans-2,3-enoyl-CoA reductase-like (363 aa).

Serine 37 bears the Phosphoserine mark. The next 3 helical transmembrane spans lie at 143-163, 217-237, and 311-331; these read WTTVFLAEYTGPLLIYLLFYL, LIMSCAFYWGFTSWIAYYINH, and ISFTVMTQTLPVGIFTLLMSI.

This sequence belongs to the steroid 5-alpha reductase family. In terms of tissue distribution, predominantly expressed in the heart and skeletal muscle.

The protein localises to the membrane. The protein resides in the endoplasmic reticulum. The chain is Trans-2,3-enoyl-CoA reductase-like (TECRL) from Homo sapiens (Human).